The chain runs to 208 residues: Regulator of G-protein signaling 4 (208 aa).

S-palmitoyl cysteine attachment occurs at residues cysteine 2, cysteine 12, and cysteine 95. The RGS domain maps to 62–178 (SLENLIHHDR…LKSPYLDLVS (117 aa)).

In terms of processing, palmitoylated on Cys-2 and/or Cys-12. Post-translationally, phosphorylated by cyclic GMP-dependent protein kinase. As to expression, expressed in the developing nervous system.

In terms of biological role, inhibits signal transduction by increasing the GTPase activity of G protein alpha subunits thereby driving them into their inactive GDP-bound form. Activity on G(z)-alpha is inhibited by phosphorylation of the G-protein. Activity on G(z)-alpha and G(i)-alpha-1 is inhibited by palmitoylation of the G-protein. The sequence is that of Regulator of G-protein signaling 4 (RGS4) from Gallus gallus (Chicken).